Consider the following 149-residue polypeptide: Calmodulin (149 aa).

Residue A2 is modified to N-acetylalanine. EF-hand domains lie at 8–43 (EQIAEFKEAFSLFDKDGDGCITTKELGTVMRSLGQN), 44–79 (PTEAELQDMINEVDADGNGTIDFPEFLNLMARKMKD), 81–116 (DSEEELKEAFRVFDKDQDGFISAAELRHVMTNLGEK), and 117–149 (LTDEEVDEMIREADVDGDGQINYEEFVKVMMAK). Residues D21, D23, D25, C27, E32, D57, D59, N61, T63, E68, D94, D96, D98, and E105 each coordinate Ca(2+). K116 is modified (N6,N6,N6-trimethyllysine). Ca(2+) contacts are provided by D130, D132, D134, Q136, and E141.

Belongs to the calmodulin family.

Calmodulin mediates the control of a large number of enzymes, ion channels and other proteins by Ca(2+). Among the enzymes to be stimulated by the calmodulin-Ca(2+) complex are a number of protein kinases and phosphatases. This Triticum aestivum (Wheat) protein is Calmodulin.